The chain runs to 193 residues: Adenine phosphoribosyltransferase (193 aa).

Belongs to the purine/pyrimidine phosphoribosyltransferase family. As to quaternary structure, homodimer.

It is found in the cytoplasm. The enzyme catalyses AMP + diphosphate = 5-phospho-alpha-D-ribose 1-diphosphate + adenine. Its pathway is purine metabolism; AMP biosynthesis via salvage pathway; AMP from adenine: step 1/1. Functionally, catalyzes a salvage reaction resulting in the formation of AMP, that is energically less costly than de novo synthesis. The protein is Adenine phosphoribosyltransferase of Bifidobacterium longum (strain NCC 2705).